Reading from the N-terminus, the 292-residue chain is Diaminopimelate epimerase (292 aa).

Substrate-binding residues include N13, Q46, and N66. The active-site Proton donor is C75. Residues 76-77, N166, N199, and 217-218 each bind substrate; these read GN and ER. C226 acts as the Proton acceptor in catalysis. Residue 227 to 228 coordinates substrate; it reads GT.

It belongs to the diaminopimelate epimerase family. In terms of assembly, homodimer.

The protein resides in the cytoplasm. It catalyses the reaction (2S,6S)-2,6-diaminopimelate = meso-2,6-diaminopimelate. It participates in amino-acid biosynthesis; L-lysine biosynthesis via DAP pathway; DL-2,6-diaminopimelate from LL-2,6-diaminopimelate: step 1/1. In terms of biological role, catalyzes the stereoinversion of LL-2,6-diaminopimelate (L,L-DAP) to meso-diaminopimelate (meso-DAP), a precursor of L-lysine and an essential component of the bacterial peptidoglycan. This is Diaminopimelate epimerase from Ralstonia nicotianae (strain ATCC BAA-1114 / GMI1000) (Ralstonia solanacearum).